We begin with the raw amino-acid sequence, 341 residues long: tRNA N6-adenosine threonylcarbamoyltransferase (341 aa).

Fe cation contacts are provided by H115 and H119. Substrate is bound by residues 138–142, D171, G184, and N276; that span reads LVSGG. D304 serves as a coordination point for Fe cation.

It belongs to the KAE1 / TsaD family. The cofactor is Fe(2+).

Its subcellular location is the cytoplasm. The enzyme catalyses L-threonylcarbamoyladenylate + adenosine(37) in tRNA = N(6)-L-threonylcarbamoyladenosine(37) in tRNA + AMP + H(+). In terms of biological role, required for the formation of a threonylcarbamoyl group on adenosine at position 37 (t(6)A37) in tRNAs that read codons beginning with adenine. Is involved in the transfer of the threonylcarbamoyl moiety of threonylcarbamoyl-AMP (TC-AMP) to the N6 group of A37, together with TsaE and TsaB. TsaD likely plays a direct catalytic role in this reaction. The protein is tRNA N6-adenosine threonylcarbamoyltransferase of Stenotrophomonas maltophilia (strain K279a).